The chain runs to 181 residues: Large ribosomal subunit protein uL5 (181 aa).

This sequence belongs to the universal ribosomal protein uL5 family. In terms of assembly, part of the 50S ribosomal subunit; part of the 5S rRNA/L5/L18/L25 subcomplex. Contacts the 5S rRNA and the P site tRNA. Forms a bridge to the 30S subunit in the 70S ribosome.

Its function is as follows. This is one of the proteins that bind and probably mediate the attachment of the 5S RNA into the large ribosomal subunit, where it forms part of the central protuberance. In the 70S ribosome it contacts protein S13 of the 30S subunit (bridge B1b), connecting the 2 subunits; this bridge is implicated in subunit movement. Contacts the P site tRNA; the 5S rRNA and some of its associated proteins might help stabilize positioning of ribosome-bound tRNAs. The protein is Large ribosomal subunit protein uL5 of Picosynechococcus sp. (strain ATCC 27264 / PCC 7002 / PR-6) (Agmenellum quadruplicatum).